We begin with the raw amino-acid sequence, 177 residues long: Large ribosomal subunit protein uL6 (177 aa).

Belongs to the universal ribosomal protein uL6 family. In terms of assembly, part of the 50S ribosomal subunit.

In terms of biological role, this protein binds to the 23S rRNA, and is important in its secondary structure. It is located near the subunit interface in the base of the L7/L12 stalk, and near the tRNA binding site of the peptidyltransferase center. The chain is Large ribosomal subunit protein uL6 from Bordetella petrii (strain ATCC BAA-461 / DSM 12804 / CCUG 43448).